A 210-amino-acid polypeptide reads, in one-letter code: MLTTMKKSSLVLALFAIAATALVTITYALTKDQIAYQQQQQLLSVLNQVVPKEQHDNELYKACVLVKNKDALGSKQAMPIYLASLNGQHSGAAIEAIAPDGYSGNIKIIVGVDSDAMVTGVRVLSHQETPGLGDKIDIRITRWVDGFLGKTVENAEDKNWAVQKDGGQFDQFTGATITPRAVVKAVKRAVWFYKTHQEELQTLPLNCETK.

Residues 9-29 traverse the membrane as a helical segment; it reads SLVLALFAIAATALVTITYAL. Thr-176 bears the FMN phosphoryl threonine mark.

The protein belongs to the RnfG family. The complex is composed of six subunits: RnfA, RnfB, RnfC, RnfD, RnfE and RnfG. FMN is required as a cofactor.

The protein resides in the cell inner membrane. In terms of biological role, part of a membrane-bound complex that couples electron transfer with translocation of ions across the membrane. This is Ion-translocating oxidoreductase complex subunit G from Aliivibrio fischeri (strain ATCC 700601 / ES114) (Vibrio fischeri).